The primary structure comprises 316 residues: Small ribosomal subunit biogenesis GTPase RsgA (316 aa).

The interval 1 to 20 (MSKLSHQQQRRIHNHRQNKL) is disordered. Over residues 8–18 (QQRRIHNHRQN) the composition is skewed to basic residues. The CP-type G domain maps to 92–251 (AGKLKPVASN…IIDTPGVRGF (160 aa)). Residues 139–142 (NKSD) and 193–201 (GQSGVGKSS) each bind GTP. The Zn(2+) site is built by Cys275, Cys280, His282, and Cys288.

The protein belongs to the TRAFAC class YlqF/YawG GTPase family. RsgA subfamily. In terms of assembly, monomer. Associates with 30S ribosomal subunit, binds 16S rRNA. It depends on Zn(2+) as a cofactor.

The protein resides in the cytoplasm. Functionally, one of several proteins that assist in the late maturation steps of the functional core of the 30S ribosomal subunit. Helps release RbfA from mature subunits. May play a role in the assembly of ribosomal proteins into the subunit. Circularly permuted GTPase that catalyzes slow GTP hydrolysis, GTPase activity is stimulated by the 30S ribosomal subunit. This is Small ribosomal subunit biogenesis GTPase RsgA from Dichelobacter nodosus (strain VCS1703A).